The sequence spans 416 residues: Enolase (416 aa).

Gln-160 is a (2R)-2-phosphoglycerate binding site. Glu-204 (proton donor) is an active-site residue. Positions 239, 280, and 306 each coordinate Mg(2+). Lys-331, Arg-360, Ser-361, and Lys-382 together coordinate (2R)-2-phosphoglycerate. Catalysis depends on Lys-331, which acts as the Proton acceptor.

Belongs to the enolase family. Mg(2+) serves as cofactor.

Its subcellular location is the cytoplasm. It is found in the secreted. The protein localises to the cell surface. It catalyses the reaction (2R)-2-phosphoglycerate = phosphoenolpyruvate + H2O. Its pathway is carbohydrate degradation; glycolysis; pyruvate from D-glyceraldehyde 3-phosphate: step 4/5. Functionally, catalyzes the reversible conversion of 2-phosphoglycerate (2-PG) into phosphoenolpyruvate (PEP). It is essential for the degradation of carbohydrates via glycolysis. The sequence is that of Enolase from Sulfolobus acidocaldarius (strain ATCC 33909 / DSM 639 / JCM 8929 / NBRC 15157 / NCIMB 11770).